The chain runs to 450 residues: ATP-dependent protease ATPase subunit HslU (450 aa).

Residues valine 29, 71 to 76 (GVGKTE), aspartate 261, glutamate 328, and arginine 400 contribute to the ATP site.

The protein belongs to the ClpX chaperone family. HslU subfamily. A double ring-shaped homohexamer of HslV is capped on each side by a ring-shaped HslU homohexamer. The assembly of the HslU/HslV complex is dependent on binding of ATP.

The protein resides in the cytoplasm. ATPase subunit of a proteasome-like degradation complex; this subunit has chaperone activity. The binding of ATP and its subsequent hydrolysis by HslU are essential for unfolding of protein substrates subsequently hydrolyzed by HslV. HslU recognizes the N-terminal part of its protein substrates and unfolds these before they are guided to HslV for hydrolysis. This Rickettsia peacockii (strain Rustic) protein is ATP-dependent protease ATPase subunit HslU.